Here is a 661-residue protein sequence, read N- to C-terminus: Glycogen debranching enzyme (661 aa).

Aspartate 338 serves as the catalytic Nucleophile. Glutamate 373 serves as the catalytic Proton donor. The disordered stretch occupies residues 460 to 481 (NQLNGEGNRDGSDRNFSNNHGV).

Belongs to the glycosyl hydrolase 13 family.

The catalysed reaction is Hydrolysis of (1-&gt;6)-alpha-D-glucosidic linkages to branches with degrees of polymerization of three or four glucose residues in limit dextrin.. The protein operates within glycan degradation; glycogen degradation. Its function is as follows. Removes maltotriose and maltotetraose chains that are attached by 1,6-alpha-linkage to the limit dextrin main chain, generating a debranched limit dextrin. The sequence is that of Glycogen debranching enzyme from Serratia proteamaculans (strain 568).